The primary structure comprises 314 residues: ATP synthase gamma chain (314 aa).

It belongs to the ATPase gamma chain family. F-type ATPases have 2 components, CF(1) - the catalytic core - and CF(0) - the membrane proton channel. CF(1) has five subunits: alpha(3), beta(3), gamma(1), delta(1), epsilon(1). CF(0) has three main subunits: a, b and c.

It localises to the cellular thylakoid membrane. Produces ATP from ADP in the presence of a proton gradient across the membrane. The gamma chain is believed to be important in regulating ATPase activity and the flow of protons through the CF(0) complex. The polypeptide is ATP synthase gamma chain (Synechococcus sp. (strain JA-2-3B'a(2-13)) (Cyanobacteria bacterium Yellowstone B-Prime)).